An 879-amino-acid polypeptide reads, in one-letter code: Nuclear autoantigen Sp-100 (879 aa).

N-acetylalanine is present on A2. S18 bears the Phosphoserine mark. Positions 33 to 149 constitute an HSR domain; sequence DLQRMFTEDQ…IYKGFENVIH (117 aa). Residues 154-245 are disordered; the sequence is LQESEEEERE…EQCAQKAEPT (92 aa). Residue S157 is modified to Phosphoserine. The D-box; recognition signal for CDC20-mediated degradation signature appears at 165–168; that stretch reads RSGL. Phosphoserine occurs at positions 171, 180, and 228. Residues 176–200 are compositionally biased toward polar residues; that stretch reads TGENSFRSLTWPPSGSPSHAGTTPP. The span at 207–228 shows a compositional bias: basic and acidic residues; the sequence is HPCETEQINAKRKDTTSDKDDS. A compositionally biased stretch (polar residues) spans 229 to 238; sequence LGSQQTNEQC. K241 is covalently cross-linked (Glycyl lysine isopeptide (Lys-Gly) (interchain with G-Cter in SUMO2)). Positions 284–297 match the PxVxL motif motif; the sequence is IQINSCSVRLVDIK. K297 is covalently cross-linked (Glycyl lysine isopeptide (Lys-Gly) (interchain with G-Cter in SUMO)). Residues K300 and K306 each participate in a glycyl lysine isopeptide (Lys-Gly) (interchain with G-Cter in SUMO2) cross-link. S331 and S362 each carry phosphoserine. The interval 333–478 is sufficient to mediate interaction with ETS1; that stretch reads GSTDVDEPLE…SSSLRRGSGS (146 aa). A disordered region spans residues 345–386; it reads ISAPRSEPVINNDNPLESNDEKEGQEATCSRPQIVPEPMDFR. Residues K366 and K387 each participate in a glycyl lysine isopeptide (Lys-Gly) (interchain with G-Cter in SUMO2) cross-link. Phosphoserine is present on residues S394, S407, S409, S410, and S451. Positions 401–596 are disordered; it reads GQDHDFSESS…KRGPRIPKDE (196 aa). A compositionally biased stretch (polar residues) spans 466 to 482; it reads ETCSSSLRRGSGSQPQE. The span at 530–591 shows a compositional bias: basic residues; that stretch reads SGKRRKKRRH…LKRRRKRGPR (62 aa). 2 consecutive short sequence motifs (nuclear localization signal) follow at residues 536–553 and 568–592; these read KRRH…RKKD and KRWQ…GPRI. K594 is covalently cross-linked (Glycyl lysine isopeptide (Lys-Gly) (interchain with G-Cter in SUMO2)). Positions 595-676 constitute an SAND domain; the sequence is DENINFKQSE…KVLMENKFLP (82 aa). 2 consecutive DNA-binding regions (HMG box) follow at residues 677–753 and 769–837; these read EPPS…KTYI and PKRP…AAYR. The Nuclear localization signal signature appears at 717–734; sequence KKCSETWKTIFAKEKGKF. A disordered region spans residues 835–879; the sequence is AYRAKGKPNSAKKRVVKAEKSKKKKEEEEDEEDEQEEENEEDDDK. The span at 838-857 shows a compositional bias: basic residues; sequence AKGKPNSAKKRVVKAEKSKK. Residues 861 to 879 are compositionally biased toward acidic residues; that stretch reads EEEDEEDEQEEENEEDDDK.

As to quaternary structure, homodimer; isoforms are able to heterodimerize. Interacts with members of the HP1 family of nonhistone chromosomal protein, such as CBX5 and CBX3 via the PxVxL motif. Interacts with ETS1; the interaction is direct and modulates ETS1 transcriptional activity. Interacts with the MRN complex which is composed of two heterodimers RAD50/MRE11 associated with a single NBN; recruits the complex to PML-related bodies. Interacts with HIPK2; positively regulates TP53-dependent transcription. Interacts with CASP8AP2; may negatively regulate CASP8AP2 export from the nucleus to the cytoplasm. Interacts with SUMO1P1/SUMO5. (Microbial infection) Interacts with Epstein-Barr virus EBNA-LP; this interaction is important for EBNA-LP coactivator activity. In terms of assembly, (Microbial infection) Interacts with human cytomegalovirus/HHV-5 protein UL123; may play a role in infection by the virus. Sumoylated. Sumoylation depends on a functional nuclear localization signal but is not necessary for nuclear import or nuclear body targeting. Post-translationally, sumoylated. Sumoylated with SUMO1. Sumoylation depends on a functional nuclear localization signal but is not necessary for nuclear import or nuclear body targeting. Sumoylation may stabilize the interaction with CBX5. In terms of processing, (Microbial infection) Immediate early protein IE1 of human cytomegalovirus (HHV-5) interferes with the sumoylation of SP100. As to expression, widely expressed. Sp100-B is expressed only in spleen, tonsil, thymus, mature B-cell line and some T-cell line, but not in brain, liver, muscle or non-lymphoid cell lines.

It is found in the nucleus. The protein resides in the PML body. It localises to the nuclear body. The protein localises to the cytoplasm. Together with PML, this tumor suppressor is a major constituent of the PML bodies, a subnuclear organelle involved in a large number of physiological processes including cell growth, differentiation and apoptosis. Functions as a transcriptional coactivator of ETS1 and ETS2 according to PubMed:11909962. Under certain conditions, it may also act as a corepressor of ETS1 preventing its binding to DNA according to PubMed:15247905. Through the regulation of ETS1 it may play a role in angiogenesis, controlling endothelial cell motility and invasion. Through interaction with the MRN complex it may be involved in the regulation of telomeres lengthening. May also regulate TP53-mediated transcription and through CASP8AP2, regulate FAS-mediated apoptosis. Also plays a role in infection by viruses, including human cytomegalovirus and Epstein-Barr virus, through mechanisms that may involve chromatin and/or transcriptional regulation. The chain is Nuclear autoantigen Sp-100 (SP100) from Homo sapiens (Human).